The sequence spans 306 residues: 3-methyl-2-oxobutanoate hydroxymethyltransferase (306 aa).

Mg(2+) contacts are provided by Asp53 and Asp96. Residues 53–54, Asp96, and Lys126 contribute to the 3-methyl-2-oxobutanoate site; that span reads DS. Glu128 is a Mg(2+) binding site. The active-site Proton acceptor is the Glu195.

The protein belongs to the PanB family. Homodecamer; pentamer of dimers. It depends on Mg(2+) as a cofactor.

It localises to the cytoplasm. The enzyme catalyses 3-methyl-2-oxobutanoate + (6R)-5,10-methylene-5,6,7,8-tetrahydrofolate + H2O = 2-dehydropantoate + (6S)-5,6,7,8-tetrahydrofolate. It functions in the pathway cofactor biosynthesis; (R)-pantothenate biosynthesis; (R)-pantoate from 3-methyl-2-oxobutanoate: step 1/2. Its function is as follows. Catalyzes the reversible reaction in which hydroxymethyl group from 5,10-methylenetetrahydrofolate is transferred onto alpha-ketoisovalerate to form ketopantoate. The sequence is that of 3-methyl-2-oxobutanoate hydroxymethyltransferase from Anaeromyxobacter dehalogenans (strain 2CP-1 / ATCC BAA-258).